Consider the following 118-residue polypeptide: Protein TusC (118 aa).

The protein belongs to the DsrF/TusC family. In terms of assembly, heterohexamer, formed by a dimer of trimers. The hexameric TusBCD complex contains 2 copies each of TusB, TusC and TusD. The TusBCD complex interacts with TusE.

The protein localises to the cytoplasm. Part of a sulfur-relay system required for 2-thiolation of 5-methylaminomethyl-2-thiouridine (mnm(5)s(2)U) at tRNA wobble positions. In Salmonella arizonae (strain ATCC BAA-731 / CDC346-86 / RSK2980), this protein is Protein TusC.